An 899-amino-acid polypeptide reads, in one-letter code: Proline-rich transmembrane protein 4 (899 aa).

Positions M1–P23 are cleaved as a signal peptide. Disordered regions lie at residues L110–T152 and T295–P340. The next 5 helical transmembrane spans lie at V370 to W390, C392 to T412, A430 to L450, L467 to A487, and G500 to G520. The residue at position 641 (S641) is a Phosphoserine. Disordered regions lie at residues T769–A797 and P839–L869. A compositionally biased stretch (low complexity) spans S840–S851.

It localises to the membrane. The protein is Proline-rich transmembrane protein 4 (PRRT4) of Homo sapiens (Human).